Reading from the N-terminus, the 334-residue chain is uncharacterized protein (334 aa).

Residue Ser-126 coordinates substrate. Tyr-151 acts as the Proton acceptor in catalysis.

This sequence belongs to the NAD(P)-dependent epimerase/dehydratase family. dTDP-glucose dehydratase subfamily.

This is an uncharacterized protein from Escherichia coli O111:H-.